The sequence spans 251 residues: Ubiquinone/menaquinone biosynthesis C-methyltransferase UbiE (251 aa).

S-adenosyl-L-methionine-binding positions include Thr-74, Asp-95, 123-124 (NA), and Ser-140.

It belongs to the class I-like SAM-binding methyltransferase superfamily. MenG/UbiE family.

The enzyme catalyses a 2-demethylmenaquinol + S-adenosyl-L-methionine = a menaquinol + S-adenosyl-L-homocysteine + H(+). It carries out the reaction a 2-methoxy-6-(all-trans-polyprenyl)benzene-1,4-diol + S-adenosyl-L-methionine = a 5-methoxy-2-methyl-3-(all-trans-polyprenyl)benzene-1,4-diol + S-adenosyl-L-homocysteine + H(+). It functions in the pathway quinol/quinone metabolism; menaquinone biosynthesis; menaquinol from 1,4-dihydroxy-2-naphthoate: step 2/2. Its pathway is cofactor biosynthesis; ubiquinone biosynthesis. Methyltransferase required for the conversion of demethylmenaquinol (DMKH2) to menaquinol (MKH2) and the conversion of 2-polyprenyl-6-methoxy-1,4-benzoquinol (DDMQH2) to 2-polyprenyl-3-methyl-6-methoxy-1,4-benzoquinol (DMQH2). This is Ubiquinone/menaquinone biosynthesis C-methyltransferase UbiE from Proteus mirabilis (strain HI4320).